The sequence spans 59 residues: ATP synthase subunit J, mitochondrial (59 aa).

The chain crosses the membrane as a helical span at residues 9–25 (ILKVYWPFFVAGAAVYY).

The protein belongs to the ATPase j subunit family. As to quaternary structure, F-type ATPases have 2 components, CF(1) - the catalytic core - and CF(0) - the membrane proton channel. In yeast, the dimeric form of ATP synthase consists of 17 polypeptides: alpha, beta, gamma, delta, epsilon, 4 (B), 5 (OSCP), 6 (A), 8, 9 (C), d, E (Tim11), f, g, h, i/j and k.

It localises to the mitochondrion membrane. Its function is as follows. Mitochondrial membrane ATP synthase (F(1)F(0) ATP synthase or Complex V) produces ATP from ADP in the presence of a proton gradient across the membrane which is generated by electron transport complexes of the respiratory chain. F-type ATPases consist of two structural domains, F(1) - containing the extramembraneous catalytic core and F(0) - containing the membrane proton channel, linked together by a central stalk and a peripheral stalk. During catalysis, ATP synthesis in the catalytic domain of F(1) is coupled via a rotary mechanism of the central stalk subunits to proton translocation. Part of the complex F(0) domain. Minor subunit located with subunit a in the membrane. The polypeptide is ATP synthase subunit J, mitochondrial (ATP18) (Saccharomyces cerevisiae (strain ATCC 204508 / S288c) (Baker's yeast)).